Consider the following 312-residue polypeptide: Ribosomal protein L11 methyltransferase (312 aa).

Thr162, Gly183, Asp205, and Asn248 together coordinate S-adenosyl-L-methionine.

The protein belongs to the methyltransferase superfamily. PrmA family.

The protein resides in the cytoplasm. The enzyme catalyses L-lysyl-[protein] + 3 S-adenosyl-L-methionine = N(6),N(6),N(6)-trimethyl-L-lysyl-[protein] + 3 S-adenosyl-L-homocysteine + 3 H(+). Functionally, methylates ribosomal protein L11. This Bacillus cytotoxicus (strain DSM 22905 / CIP 110041 / 391-98 / NVH 391-98) protein is Ribosomal protein L11 methyltransferase.